A 274-amino-acid chain; its full sequence is MPFRSNNPITRDELLSRFFPQYHPVTTFNSGLSGGSFLIEHQGQRFVVRQPHDPDAPQSAFLRQYRALSQLPACIAPKPHLYLRDWMVVDYLPGAVKTYLPDTNELAGLLYYLHQQPRFGWRITLLPLLELYWQQSDPARRTVGWLRMLKRLRKAREPRPLRLSPLHMDVHAGNLVHSASGLKLIDWEYAGDGDIALELAAVWVENTEQHRQLVNDYATRAKIYPAQLWRQVRRWFPWLLMLKAGWFEYRWRQTGDQQFIRLADDTWRQLLIKQ.

It belongs to the thiamine kinase family.

It catalyses the reaction thiamine + ATP = thiamine phosphate + ADP + H(+). It participates in cofactor biosynthesis; thiamine diphosphate biosynthesis; thiamine phosphate from thiamine: step 1/1. Catalyzes the ATP-dependent phosphorylation of thiamine to thiamine phosphate. Is involved in thiamine salvage. The polypeptide is Thiamine kinase (Escherichia coli (strain K12 / MC4100 / BW2952)).